A 119-amino-acid chain; its full sequence is Large ribosomal subunit protein bL20 (119 aa).

It belongs to the bacterial ribosomal protein bL20 family.

In terms of biological role, binds directly to 23S ribosomal RNA and is necessary for the in vitro assembly process of the 50S ribosomal subunit. It is not involved in the protein synthesizing functions of that subunit. The sequence is that of Large ribosomal subunit protein bL20 from Legionella pneumophila (strain Paris).